A 338-amino-acid chain; its full sequence is Glutamate/glutamine/aspartate/asparagine-binding protein BztA (338 aa).

The signal sequence occupies residues 1–22 (MKKSAFFGSVALAALVAGAASA).

This sequence belongs to the bacterial solute-binding protein 3 family.

The protein resides in the periplasm. Its function is as follows. Part of a binding-protein-dependent transport system for glutamate, glutamine, aspartate and asparagine. In Rhodobacter capsulatus (strain ATCC BAA-309 / NBRC 16581 / SB1003), this protein is Glutamate/glutamine/aspartate/asparagine-binding protein BztA (bztA).